A 643-amino-acid polypeptide reads, in one-letter code: Phosphomethylpyrimidine synthase (643 aa).

Substrate-binding positions include asparagine 248, methionine 277, tyrosine 306, histidine 342, 362-364 (SRG), 403-406 (DGLR), and glutamate 442. A Zn(2+)-binding site is contributed by histidine 446. Tyrosine 469 is a substrate binding site. Histidine 510 is a binding site for Zn(2+). The [4Fe-4S] cluster site is built by cysteine 590, cysteine 593, and cysteine 598.

This sequence belongs to the ThiC family. As to quaternary structure, homodimer. The cofactor is [4Fe-4S] cluster.

The catalysed reaction is 5-amino-1-(5-phospho-beta-D-ribosyl)imidazole + S-adenosyl-L-methionine = 4-amino-2-methyl-5-(phosphooxymethyl)pyrimidine + CO + 5'-deoxyadenosine + formate + L-methionine + 3 H(+). Its pathway is cofactor biosynthesis; thiamine diphosphate biosynthesis. Functionally, catalyzes the synthesis of the hydroxymethylpyrimidine phosphate (HMP-P) moiety of thiamine from aminoimidazole ribotide (AIR) in a radical S-adenosyl-L-methionine (SAM)-dependent reaction. The chain is Phosphomethylpyrimidine synthase from Burkholderia multivorans (strain ATCC 17616 / 249).